Consider the following 71-residue polypeptide: Protein PSY2 (71 aa).

A signal peptide spans 1-20 (MSFGTRLLLFLILTLPLVTS). A propeptide spanning residues 21–46 (SSPNTLHVSGIVKTGTTSRFLMMTIE) is cleaved from the precursor. Y48 is subject to Sulfotyrosine. The interval 50-71 (DPSANTRHDPSVPTNAKADTTP) is disordered. A compositionally biased stretch (polar residues) spans 61-71 (VPTNAKADTTP). P62 carries the 4-hydroxyproline modification. P62 is a glycosylation site (O-linked (Ara...) hydroxyproline). A propeptide spanning residues 65 to 71 (AKADTTP) is cleaved from the precursor.

Belongs to the sulfated-peptide plant hormone family. The sulfation and the glycosylation are required for full activity.

It localises to the secreted. Its function is as follows. Promotes cellular proliferation and expansion. This is Protein PSY2 (PSY2) from Arabidopsis thaliana (Mouse-ear cress).